The chain runs to 428 residues: Dihydroorotase (428 aa).

Residues His-59 and His-61 each contribute to the Zn(2+) site. Residues 61–63 (HLR) and Asn-93 contribute to the substrate site. Asp-151, His-178, and His-231 together coordinate Zn(2+). Residue Asn-277 participates in substrate binding. Asp-304 serves as a coordination point for Zn(2+). Residue Asp-304 is part of the active site. Substrate is bound by residues His-308 and 322 to 323 (FG).

Belongs to the metallo-dependent hydrolases superfamily. DHOase family. Class I DHOase subfamily. Zn(2+) serves as cofactor.

It carries out the reaction (S)-dihydroorotate + H2O = N-carbamoyl-L-aspartate + H(+). It functions in the pathway pyrimidine metabolism; UMP biosynthesis via de novo pathway; (S)-dihydroorotate from bicarbonate: step 3/3. In terms of biological role, catalyzes the reversible cyclization of carbamoyl aspartate to dihydroorotate. This chain is Dihydroorotase, found in Bacillus anthracis (strain A0248).